A 665-amino-acid polypeptide reads, in one-letter code: DNA ligase (665 aa).

NAD(+) contacts are provided by residues 35–39, 88–89, and E117; these read DAIYD and SL. K119 functions as the N6-AMP-lysine intermediate in the catalytic mechanism. 4 residues coordinate NAD(+): R140, E174, K290, and K314. Residues C406, C409, C424, and C429 each coordinate Zn(2+). The region spanning 588-665 is the BRCT domain; it reads KKTERFAQLS…EEAFNELLVS (78 aa).

It belongs to the NAD-dependent DNA ligase family. LigA subfamily. Mg(2+) is required as a cofactor. The cofactor is Mn(2+).

It carries out the reaction NAD(+) + (deoxyribonucleotide)n-3'-hydroxyl + 5'-phospho-(deoxyribonucleotide)m = (deoxyribonucleotide)n+m + AMP + beta-nicotinamide D-nucleotide.. DNA ligase that catalyzes the formation of phosphodiester linkages between 5'-phosphoryl and 3'-hydroxyl groups in double-stranded DNA using NAD as a coenzyme and as the energy source for the reaction. It is essential for DNA replication and repair of damaged DNA. In Metamycoplasma arthritidis (strain 158L3-1) (Mycoplasma arthritidis), this protein is DNA ligase.